The sequence spans 273 residues: Undecaprenyl-diphosphatase (273 aa).

7 helical membrane passes run 6–26 (SLLIAAILGVVEGLTEFLPVS), 45–65 (AKTFEVVIQLGSILAVVVMFW), 90–110 (LTLIHILLGMIPAVVLGLLFH), 116–136 (LFNPINVMYALVVGGLLLIAA), 190–210 (YAASEFSFLLAVPMMMGATAL), 222–242 (GDIPMFAVGFITAFVVALIAI), and 252–272 (ISFIPFAIYRFIVAAAVYVVF).

It belongs to the UppP family.

It localises to the cell inner membrane. It carries out the reaction di-trans,octa-cis-undecaprenyl diphosphate + H2O = di-trans,octa-cis-undecaprenyl phosphate + phosphate + H(+). Its function is as follows. Catalyzes the dephosphorylation of undecaprenyl diphosphate (UPP). Confers resistance to bacitracin. This chain is Undecaprenyl-diphosphatase, found in Escherichia coli O7:K1 (strain IAI39 / ExPEC).